Consider the following 808-residue polypeptide: Auxin response factor 4 (808 aa).

A compositionally biased stretch (pro residues) spans 1–13 (MPPAAMAPPPPPQ). The tract at residues 1–20 (MPPAAMAPPPPPQGSSTGDP) is disordered. Residues 129–231 (FCKTLTASDT…ELRVGVRRAM (103 aa)) constitute a DNA-binding region (TF-B3). The segment covering 342–352 (PSTIPRPDRVS) has biased composition (basic and acidic residues). Disordered stretches follow at residues 342–433 (PSTI…DSDV), 661–691 (TAGT…VAST), and 778–808 (QKMN…KSDN). The segment covering 402–432 (AQAQRSQNSTVLQGQEQMTLRSNLTESNDSD) has biased composition (polar residues). The region spanning 692 to 785 (RSCTKVHKQG…EVQKMNSKSN (94 aa)) is the PB1 domain. Basic and acidic residues predominate over residues 787-799 (PRKDDSSENEKGH).

It belongs to the ARF family. As to quaternary structure, homodimers and heterodimers. In terms of tissue distribution, expressed in roots, culms, leaves and young panicles.

It localises to the nucleus. In terms of biological role, auxin response factors (ARFs) are transcriptional factors that bind specifically to the DNA sequence 5'-TGTCTC-3' found in the auxin-responsive promoter elements (AuxREs). The chain is Auxin response factor 4 (ARF4) from Oryza sativa subsp. japonica (Rice).